A 161-amino-acid polypeptide reads, in one-letter code: Protein-export protein SecB (161 aa).

This sequence belongs to the SecB family. As to quaternary structure, homotetramer, a dimer of dimers. One homotetramer interacts with 1 SecA dimer.

It localises to the cytoplasm. Functionally, one of the proteins required for the normal export of preproteins out of the cell cytoplasm. It is a molecular chaperone that binds to a subset of precursor proteins, maintaining them in a translocation-competent state. It also specifically binds to its receptor SecA. In Coxiella burnetii (strain Dugway 5J108-111), this protein is Protein-export protein SecB.